Reading from the N-terminus, the 110-residue chain is Large ribosomal subunit protein uL22 (110 aa).

This sequence belongs to the universal ribosomal protein uL22 family. As to quaternary structure, part of the 50S ribosomal subunit.

Functionally, this protein binds specifically to 23S rRNA; its binding is stimulated by other ribosomal proteins, e.g. L4, L17, and L20. It is important during the early stages of 50S assembly. It makes multiple contacts with different domains of the 23S rRNA in the assembled 50S subunit and ribosome. In terms of biological role, the globular domain of the protein is located near the polypeptide exit tunnel on the outside of the subunit, while an extended beta-hairpin is found that lines the wall of the exit tunnel in the center of the 70S ribosome. The sequence is that of Large ribosomal subunit protein uL22 from Shewanella amazonensis (strain ATCC BAA-1098 / SB2B).